We begin with the raw amino-acid sequence, 267 residues long: FCS-Like Zinc finger 8 (267 aa).

2 disordered regions span residues 1-29 and 124-156; these read MLKKRSRSKQALMAETNQSQNQKQSKTTP and DSPISSSDFGIKTRNSQPETKKPGSESGLGSPR. Polar residues-rich tracts occupy residues 15-28 and 126-141; these read ETNQSQNQKQSKTT and PISSSDFGIKTRNSQP. The FLZ-type zinc-finger motif lies at 221 to 265; it reads SFLSCCCNCKKSLGPRDDIFMYRGDRAFCSSECRSIEMMMSEEND.

It belongs to the FLZ family. As to quaternary structure, interacts with KIN10 and KIN11 via its FLZ-type zinc finger domain. Interacts with KINB1, KINB2, KINB3 and SNF4 via its N-terminal part. Interacts with HB21/ZHD3.

In terms of biological role, may act as an adapter to facilitate the interaction of SnRK1 complex with effector proteins, conferring tissue- and stimulus-type specific differences in the SnRK1 regulation pathway. This chain is FCS-Like Zinc finger 8, found in Arabidopsis thaliana (Mouse-ear cress).